Consider the following 329-residue polypeptide: Glutamyl-Q tRNA(Asp) synthetase (329 aa).

L-glutamate contacts are provided by residues 8–12 and Glu-44; that span reads RLAPS. Positions 11–21 match the 'HIGH' region motif; the sequence is PSPTGAQHLGN. Zn(2+) contacts are provided by Cys-100, Cys-102, Tyr-129, and Cys-133. Residues Tyr-196 and Arg-214 each coordinate L-glutamate. The 'KMSKS' region signature appears at 252 to 256; the sequence is RLAKR. Lys-255 is a binding site for ATP.

It belongs to the class-I aminoacyl-tRNA synthetase family. GluQ subfamily. The cofactor is Zn(2+).

In terms of biological role, catalyzes the tRNA-independent activation of glutamate in presence of ATP and the subsequent transfer of glutamate onto a tRNA(Asp). Glutamate is transferred on the 2-amino-5-(4,5-dihydroxy-2-cyclopenten-1-yl) moiety of the queuosine in the wobble position of the QUC anticodon. The sequence is that of Glutamyl-Q tRNA(Asp) synthetase from Rhodopirellula baltica (strain DSM 10527 / NCIMB 13988 / SH1).